Reading from the N-terminus, the 383-residue chain is UPF0425 pyridoxal phosphate-dependent protein Msp_0916 (383 aa).

Lys-207 carries the N6-(pyridoxal phosphate)lysine modification.

Belongs to the UPF0425 family. Pyridoxal 5'-phosphate serves as cofactor.

The protein is UPF0425 pyridoxal phosphate-dependent protein Msp_0916 of Methanosphaera stadtmanae (strain ATCC 43021 / DSM 3091 / JCM 11832 / MCB-3).